The chain runs to 585 residues: Arginine--tRNA ligase (585 aa).

A 'HIGH' region motif is present at residues 131–141; sequence ANPTGPMHVGH.

The protein belongs to the class-I aminoacyl-tRNA synthetase family. As to quaternary structure, monomer.

The protein localises to the cytoplasm. The catalysed reaction is tRNA(Arg) + L-arginine + ATP = L-arginyl-tRNA(Arg) + AMP + diphosphate. The protein is Arginine--tRNA ligase of Bartonella tribocorum (strain CIP 105476 / IBS 506).